A 297-amino-acid chain; its full sequence is uncharacterized protein (297 aa).

The tract at residues 267-297 (NTQHAGKPGAQHRTRRSPPAFRRADRLRQSA) is disordered. The span at 288–297 (RRADRLRQSA) shows a compositional bias: basic and acidic residues.

This is an uncharacterized protein from Treponema pallidum (strain Nichols).